We begin with the raw amino-acid sequence, 231 residues long: Ribonuclease 3 (231 aa).

In terms of domain architecture, RNase III spans 1 to 134 (MKTLEKKLAE…FLGALLLDAG (134 aa)). Position 47 (Glu-47) interacts with Mg(2+). The active site involves Asp-51. 2 residues coordinate Mg(2+): Asp-120 and Glu-123. Glu-123 is an active-site residue. Residues 160 to 229 (DYKTALQELL…AKNALEKLQR (70 aa)) enclose the DRBM domain.

Belongs to the ribonuclease III family. Homodimer. The cofactor is Mg(2+).

It localises to the cytoplasm. The enzyme catalyses Endonucleolytic cleavage to 5'-phosphomonoester.. Functionally, digests double-stranded RNA. Involved in the processing of primary rRNA transcript to yield the immediate precursors to the large and small rRNAs (23S and 16S). Also processes some mRNAs, and tRNAs when they are encoded in the rRNA operon. Its function is as follows. CRISPR (clustered regularly interspaced short palindromic repeat) is an adaptive immune system that provides protection against mobile genetic elements (viruses, transposable elements and conjugative plasmids). CRISPR clusters contain spacers, sequences complementary to antecedent mobile elements, and target invading nucleic acids. CRISPR clusters are transcribed and processed into CRISPR RNA (crRNA). In this organism endogenous ribonuclease 3 and Cas9 are required for correct coprocessing of pre-crRNA and the trans-encoded small RNA (tracrRNA). Cas9, crRNA and tracrRNA are required for cleavage of invading DNA. Complements pre-crRNA and tracrRNA coprocessing defects in an rnc deletion in S.pyogenes strain 370. This Streptococcus mutans serotype c (strain ATCC 700610 / UA159) protein is Ribonuclease 3.